The chain runs to 301 residues: uncharacterized protein (301 aa).

A signal peptide spans 1–22 (MPGRFTVALVIALGGTCGVADA). The GP-PDE domain maps to 31-300 (PMIVAHRAGT…DSPLAAQQWR (270 aa)).

This is an uncharacterized protein from Mycobacterium tuberculosis (strain ATCC 25618 / H37Rv).